Here is a 212-residue protein sequence, read N- to C-terminus: Phosphoribosylformylglycinamidine synthase subunit PurQ (212 aa).

The Glutamine amidotransferase type-1 domain occupies 2–212; that stretch reads RIAVLKFPGT…WLGLISWLRR (211 aa). C85 (nucleophile) is an active-site residue. Catalysis depends on residues H183, E185, and H191.

As to quaternary structure, part of the FGAM synthase complex composed of 1 PurL, 1 PurQ and 2 PurS subunits.

Its subcellular location is the cytoplasm. The enzyme catalyses N(2)-formyl-N(1)-(5-phospho-beta-D-ribosyl)glycinamide + L-glutamine + ATP + H2O = 2-formamido-N(1)-(5-O-phospho-beta-D-ribosyl)acetamidine + L-glutamate + ADP + phosphate + H(+). It carries out the reaction L-glutamine + H2O = L-glutamate + NH4(+). The protein operates within purine metabolism; IMP biosynthesis via de novo pathway; 5-amino-1-(5-phospho-D-ribosyl)imidazole from N(2)-formyl-N(1)-(5-phospho-D-ribosyl)glycinamide: step 1/2. Functionally, part of the phosphoribosylformylglycinamidine synthase complex involved in the purines biosynthetic pathway. Catalyzes the ATP-dependent conversion of formylglycinamide ribonucleotide (FGAR) and glutamine to yield formylglycinamidine ribonucleotide (FGAM) and glutamate. The FGAM synthase complex is composed of three subunits. PurQ produces an ammonia molecule by converting glutamine to glutamate. PurL transfers the ammonia molecule to FGAR to form FGAM in an ATP-dependent manner. PurS interacts with PurQ and PurL and is thought to assist in the transfer of the ammonia molecule from PurQ to PurL. The protein is Phosphoribosylformylglycinamidine synthase subunit PurQ of Pyrobaculum aerophilum (strain ATCC 51768 / DSM 7523 / JCM 9630 / CIP 104966 / NBRC 100827 / IM2).